The primary structure comprises 170 residues: Ribulose bisphosphate carboxylase small subunit, chloroplastic (170 aa).

2 consecutive transit peptides (chloroplast) follow at residues 1–46 and 1–47; these read MAPT…GRIR and MAPT…RIRC.

The protein belongs to the RuBisCO small chain family. As to quaternary structure, heterohexadecamer of 8 large and 8 small subunits.

It localises to the plastid. Its subcellular location is the chloroplast. In terms of biological role, ruBisCO catalyzes two reactions: the carboxylation of D-ribulose 1,5-bisphosphate, the primary event in carbon dioxide fixation, as well as the oxidative fragmentation of the pentose substrate. Both reactions occur simultaneously and in competition at the same active site. Although the small subunit is not catalytic it is essential for maximal activity. This chain is Ribulose bisphosphate carboxylase small subunit, chloroplastic, found in Zea mays (Maize).